The following is a 1077-amino-acid chain: Insulin receptor substrate 2-B (1077 aa).

The tract at residues 1–66 is disordered; it reads MAGVLCPTEE…APASTAEDDV (66 aa). 2 short sequence motifs (YXXM motif) span residues 33 to 36 and 147 to 150; these read YRRM and YFAM. In terms of domain architecture, PH spans 65 to 170; it reads DVRKRGYLRK…WYQALSELIN (106 aa). The IRS-type PTB domain maps to 195-299; the sequence is FKEVWQVNVK…DTMKALKAYS (105 aa). Disordered regions lie at residues 342 to 373, 428 to 464, and 476 to 495; these read ETVV…RPFR, VCSS…SDEY, and VRSN…EENT. Polar residues-rich tracts occupy residues 350 to 364 and 428 to 444; these read SAKN…SSEG and VCSS…LTRP. The span at 445–457 shows a compositional bias: low complexity; that stretch reads SSSSVCGSPSDGG. Residues 477-495 are compositionally biased toward polar residues; it reads RSNTPDSLGNTPPIQEENT. Positions 499 to 502 match the YXXM motif 3 motif; it reads YMSM. Polar residues predominate over residues 530-544; the sequence is KPTNAASQQKSQTAV. The interval 530–571 is disordered; it reads KPTNAASQQKSQTAVSLDEDSEETNKQFAYAESPKLKDSSHV. 6 short sequence motifs (YXXM motif) span residues 595–598, 608–611, 634–637, 666–669, 713–716, and 891–894; these read YMPM, YLPM, YMMM, YMDM, YVPM, and YTTM.

In terms of processing, phosphorylated by INSR.

Potentiates insulin signaling. The protein is Insulin receptor substrate 2-B (irs2-b) of Xenopus laevis (African clawed frog).